Reading from the N-terminus, the 149-residue chain is Ribonuclease pancreatic (149 aa).

Positions 1–25 (MGLEKSFILFSLLVLVLGWVQPSLG) are cleaved as a signal peptide. Positions 32 and 35 each coordinate substrate. Histidine 37 serves as the catalytic Proton acceptor. 4 cysteine pairs are disulfide-bonded: cysteine 51/cysteine 109, cysteine 65/cysteine 120, cysteine 83/cysteine 135, and cysteine 90/cysteine 97. Substrate is bound by residues 66-70 (KPVNT), lysine 91, and arginine 110. Residue histidine 144 is the Proton donor of the active site.

Belongs to the pancreatic ribonuclease family. In terms of assembly, monomer. Interacts with and forms tight 1:1 complexes with RNH1. Dimerization of two such complexes may occur. Interaction with RNH1 inhibits this protein. Pancreas.

Its subcellular location is the secreted. The enzyme catalyses an [RNA] containing cytidine + H2O = an [RNA]-3'-cytidine-3'-phosphate + a 5'-hydroxy-ribonucleotide-3'-[RNA].. The catalysed reaction is an [RNA] containing uridine + H2O = an [RNA]-3'-uridine-3'-phosphate + a 5'-hydroxy-ribonucleotide-3'-[RNA].. Its function is as follows. Endonuclease that catalyzes the cleavage of RNA on the 3' side of pyrimidine nucleotides. Acts on single-stranded and double-stranded RNA. In Leopoldamys edwardsi (Edwards's long-tailed giant rat), this protein is Ribonuclease pancreatic (RNASE1).